We begin with the raw amino-acid sequence, 327 residues long: Olfactory receptor 6A2 (327 aa).

Residues 1 to 26 (MEWRNHSGRVSEFVLLGFPAPAPLQV) lie on the Extracellular side of the membrane. N-linked (GlcNAc...) asparagine glycosylation is present at Asn-5. A helical membrane pass occupies residues 27–47 (LLFALLLLAYVLVLTENTLII). Over 48 to 55 (MAIRNHST) the chain is Cytoplasmic. The helical transmembrane segment at 56-76 (LHKPMYFFLANMSFLEIWYVT) threads the bilayer. The Extracellular portion of the chain corresponds to 77-104 (VTIPKMLAGFVGSKQDHGQLISFEGCMT). A disulfide bond links Cys-102 and Cys-194. Residues 105-125 (QLYFFLGLGCTECVLLAVMAY) traverse the membrane as a helical segment. Topologically, residues 126–144 (DRYMAICYPLHYPVIVSGR) are cytoplasmic. Residues 145–165 (LCVQMAAGSWAGGFGISMVKV) traverse the membrane as a helical segment. Over 166–201 (FLISGLSYCGPNIINHFFCDVSPLLNLSCTDMSTAE) the chain is Extracellular. A glycan (N-linked (GlcNAc...) asparagine) is linked at Asn-191. A helical membrane pass occupies residues 202–222 (LTDFILAIFILLGPLSVTGAS). Residues 223 to 242 (YVAITGAVMHIPSAAGRYKA) lie on the Cytoplasmic side of the membrane. A helical membrane pass occupies residues 243-263 (FSTCASHLTVVIIFYAASIFI). The Extracellular portion of the chain corresponds to 264 to 276 (YARPKALSAFDTN). A helical membrane pass occupies residues 277-297 (KLVSVLYAVIVPLLNPIIYCL). The Cytoplasmic portion of the chain corresponds to 298-327 (RNQEVKRALCCTLHLYQHQDPDPKKASRNV).

It belongs to the G-protein coupled receptor 1 family.

Its subcellular location is the cell membrane. Its function is as follows. Odorant receptor. This is Olfactory receptor 6A2 (OR6A2) from Homo sapiens (Human).